Consider the following 50-residue polypeptide: Peptide encoded by miPEP319a (50 aa).

Regulatory peptide encoded by the primary transcript (pri-miR319a) of the microRNA miR319a that enhances the accumulation of its corresponding mature miRNA. Acts probably as a transcriptional activator of its corresponding pri-miRNA. The sequence is that of Peptide encoded by miPEP319a from Arabidopsis thaliana (Mouse-ear cress).